The primary structure comprises 149 residues: Large-conductance mechanosensitive channel (149 aa).

The next 3 membrane-spanning stretches (helical) occupy residues 16-36 (VMDL…VNSV), 40-60 (LIMP…KFIL), and 89-109 (GSFI…FMMV).

The protein belongs to the MscL family. In terms of assembly, homopentamer.

It localises to the cell inner membrane. Functionally, channel that opens in response to stretch forces in the membrane lipid bilayer. May participate in the regulation of osmotic pressure changes within the cell. The protein is Large-conductance mechanosensitive channel of Paraburkholderia phymatum (strain DSM 17167 / CIP 108236 / LMG 21445 / STM815) (Burkholderia phymatum).